The chain runs to 561 residues: Arginine--tRNA ligase (561 aa).

The 'HIGH' region motif lies at 135 to 145 (ANPTGLLHMGN).

Belongs to the class-I aminoacyl-tRNA synthetase family. In terms of assembly, monomer.

The protein resides in the cytoplasm. It carries out the reaction tRNA(Arg) + L-arginine + ATP = L-arginyl-tRNA(Arg) + AMP + diphosphate. This chain is Arginine--tRNA ligase, found in Desulfitobacterium hafniense (strain DSM 10664 / DCB-2).